We begin with the raw amino-acid sequence, 298 residues long: Protoheme IX farnesyltransferase (298 aa).

A run of 9 helical transmembrane segments spans residues 26 to 46 (VVSL…PGVV), 52 to 72 (IFAT…NCLV), 99 to 119 (FVFL…LVNP), 120 to 140 (LTMW…TVIL), 148 to 168 (IVIG…AVTG), 174 to 194 (ALLL…ALAL), 219 to 239 (LHVL…YATQ), 241 to 261 (SGLI…YYAV), and 276 to 296 (FRYS…DHYI).

Belongs to the UbiA prenyltransferase family. Protoheme IX farnesyltransferase subfamily.

The protein resides in the cell inner membrane. It catalyses the reaction heme b + (2E,6E)-farnesyl diphosphate + H2O = Fe(II)-heme o + diphosphate. Its pathway is porphyrin-containing compound metabolism; heme O biosynthesis; heme O from protoheme: step 1/1. Its function is as follows. Converts heme B (protoheme IX) to heme O by substitution of the vinyl group on carbon 2 of heme B porphyrin ring with a hydroxyethyl farnesyl side group. This is Protoheme IX farnesyltransferase from Nitrosospira multiformis (strain ATCC 25196 / NCIMB 11849 / C 71).